The chain runs to 212 residues: Cytochrome c biogenesis ATP-binding export protein CcmA (212 aa).

The ABC transporter domain occupies 7–209 (LSLQNLSCQR…HLQKLNLAAY (203 aa)). 39 to 46 (GHNGIGKT) provides a ligand contact to ATP.

Belongs to the ABC transporter superfamily. CcmA exporter (TC 3.A.1.107) family. The complex is composed of two ATP-binding proteins (CcmA) and two transmembrane proteins (CcmB).

It localises to the cell inner membrane. The enzyme catalyses heme b(in) + ATP + H2O = heme b(out) + ADP + phosphate + H(+). Part of the ABC transporter complex CcmAB involved in the biogenesis of c-type cytochromes; once thought to export heme, this seems not to be the case, but its exact role is uncertain. Responsible for energy coupling to the transport system. The polypeptide is Cytochrome c biogenesis ATP-binding export protein CcmA (Haemophilus influenzae (strain ATCC 51907 / DSM 11121 / KW20 / Rd)).